We begin with the raw amino-acid sequence, 447 residues long: Putative branched-chain amino acid carrier protein SSP1343 (447 aa).

The next 12 membrane-spanning stretches (helical) occupy residues 6-26 (WIIG…IFPP), 40-60 (ILAF…VGAL), 74-94 (PKFS…LFAI), 116-136 (LALF…CINP), 143-163 (IGSL…VKGF), 192-212 (GYLT…VNAV), 228-248 (LMAG…LGYI), 289-309 (LLGI…VVAV), 324-344 (IYVI…LNSV), 349-369 (VPVL…ILLA), 381-401 (IPVA…QGWI), and 416-436 (LEWF…AAMV).

Belongs to the branched chain amino acid transporter family.

The protein localises to the cell membrane. Its function is as follows. Component of the transport system for branched-chain amino acids (leucine, isoleucine and valine), which is coupled to a proton motive force. This chain is Putative branched-chain amino acid carrier protein SSP1343, found in Staphylococcus saprophyticus subsp. saprophyticus (strain ATCC 15305 / DSM 20229 / NCIMB 8711 / NCTC 7292 / S-41).